The primary structure comprises 85 residues: Small ribosomal subunit protein uS17 (85 aa).

The protein belongs to the universal ribosomal protein uS17 family. As to quaternary structure, part of the 30S ribosomal subunit.

Its function is as follows. One of the primary rRNA binding proteins, it binds specifically to the 5'-end of 16S ribosomal RNA. The sequence is that of Small ribosomal subunit protein uS17 from Geobacter metallireducens (strain ATCC 53774 / DSM 7210 / GS-15).